The chain runs to 1093 residues: TATA element modulatory factor (1093 aa).

Disordered stretches follow at residues 38–80 and 108–189; these read WAET…SPKA and TIQK…DMKV. Positions 51–70 are enriched in polar residues; it reads SPVSGGWDTSTWGLKSNTEP. Ser-72, Ser-77, Ser-112, and Ser-136 each carry phosphoserine. Basic and acidic residues predominate over residues 123 to 137; the sequence is QRPEEEVKSSLHESL. The span at 139–158 shows a compositional bias: polar residues; sequence IGQSRTPETTESQVKDSSLC. Basic and acidic residues predominate over residues 173–187; the sequence is TEGKHEETVNKESDM. Residues Ser-199 and Ser-217 each carry the phosphoserine modification. A compositionally biased stretch (basic and acidic residues) spans 229–238; that stretch reads PKEQKHEDRQ. 2 disordered regions span residues 229–260 and 266–285; these read PKEQ…SDIE and SVIS…SKSS. Low complexity predominate over residues 246-257; sequence VSTFSSGTSTTS. Residues Ser-328, Ser-330, Ser-333, Ser-338, Ser-344, Ser-413, Ser-542, Ser-925, and Ser-928 each carry the phosphoserine modification. An interaction with Elongin BC complex region spans residues 333–342; that stretch reads SLDSRSVSEI. A coiled-coil region spans residues 439–922; sequence EALSEKEDVC…QETIKEKERK (484 aa). The disordered stretch occupies residues 919–939; the sequence is KERKPFSVSSTPTMSRSSSIS. A compositionally biased stretch (low complexity) spans 925–939; that stretch reads SVSSTPTMSRSSSIS. Thr-929 bears the Phosphothreonine mark. Phosphoserine is present on Ser-933. Residues 984–1092 are a coiled coil; it reads SIIENLQSQL…QIDELLRQSL (109 aa).

Interacts with TRNP1; may regulate TRNP1 proteasomal degradation. Component of the SNF/SWI transcription factor complexes. Interacts with RAB6A. Interacts with STAT3 and FER. Interacts with TCEB1. In terms of processing, phosphorylated by FER.

It localises to the cytoplasm. It is found in the nucleus. Its subcellular location is the golgi apparatus membrane. In terms of biological role, potential coactivator of the androgen receptor. Mediates STAT3 degradation. May play critical roles in two RAB6-dependent retrograde transport processes: one from endosomes to the Golgi and the other from the Golgi to the ER. This protein binds the HIV-1 TATA element and inhibits transcriptional activation by the TATA-binding protein (TBP). This Homo sapiens (Human) protein is TATA element modulatory factor (TMF1).